A 29-amino-acid chain; its full sequence is Cytochrome b6-f complex subunit 8 (29 aa).

A helical transmembrane segment spans residues 3–23 (ILTLGWVGLLGLFTYSIAMVV).

Belongs to the PetN family. The 4 large subunits of the cytochrome b6-f complex are cytochrome b6, subunit IV (17 kDa polypeptide, PetD), cytochrome f and the Rieske protein, while the 4 small subunits are PetG, PetL, PetM and PetN. The complex functions as a dimer.

It localises to the cellular thylakoid membrane. Its function is as follows. Component of the cytochrome b6-f complex, which mediates electron transfer between photosystem II (PSII) and photosystem I (PSI), cyclic electron flow around PSI, and state transitions. This Cyanothece sp. (strain PCC 7425 / ATCC 29141) protein is Cytochrome b6-f complex subunit 8.